The following is a 697-amino-acid chain: Polyribonucleotide nucleotidyltransferase (697 aa).

2 residues coordinate Mg(2+): Asp488 and Asp494. The region spanning 555–614 is the KH domain; it reads PTLLTLKINPDKIRDVIGKGGATIRALTEETGCTIDIEDDGSVKIYGETREKADEAVRRV. One can recognise an S1 motif domain in the interval 624 to 692; sequence GAIYEGKVTR…QRGRIKLSMK (69 aa).

The protein belongs to the polyribonucleotide nucleotidyltransferase family. In terms of assembly, component of the RNA degradosome, which is a multiprotein complex involved in RNA processing and mRNA degradation. The cofactor is Mg(2+).

Its subcellular location is the cytoplasm. The catalysed reaction is RNA(n+1) + phosphate = RNA(n) + a ribonucleoside 5'-diphosphate. Involved in mRNA degradation. Catalyzes the phosphorolysis of single-stranded polyribonucleotides processively in the 3'- to 5'-direction. The chain is Polyribonucleotide nucleotidyltransferase from Alcanivorax borkumensis (strain ATCC 700651 / DSM 11573 / NCIMB 13689 / SK2).